A 126-amino-acid polypeptide reads, in one-letter code: Large-conductance mechanosensitive channel (126 aa).

2 helical membrane passes run V14–L34 and G69–V89.

The protein belongs to the MscL family. As to quaternary structure, homopentamer.

Its subcellular location is the cell membrane. Its function is as follows. Channel that opens in response to stretch forces in the membrane lipid bilayer. May participate in the regulation of osmotic pressure changes within the cell. In Leuconostoc citreum (strain KM20), this protein is Large-conductance mechanosensitive channel.